We begin with the raw amino-acid sequence, 352 residues long: N-acetyl-gamma-glutamyl-phosphate reductase (352 aa).

Residue Cys-155 is part of the active site.

The protein belongs to the NAGSA dehydrogenase family. Type 1 subfamily.

It localises to the cytoplasm. It catalyses the reaction N-acetyl-L-glutamate 5-semialdehyde + phosphate + NADP(+) = N-acetyl-L-glutamyl 5-phosphate + NADPH + H(+). It functions in the pathway amino-acid biosynthesis; L-arginine biosynthesis; N(2)-acetyl-L-ornithine from L-glutamate: step 3/4. Its function is as follows. Catalyzes the NADPH-dependent reduction of N-acetyl-5-glutamyl phosphate to yield N-acetyl-L-glutamate 5-semialdehyde. The polypeptide is N-acetyl-gamma-glutamyl-phosphate reductase (Picosynechococcus sp. (strain ATCC 27264 / PCC 7002 / PR-6) (Agmenellum quadruplicatum)).